The following is a 251-amino-acid chain: Demethylmenaquinone methyltransferase (251 aa).

Residues T66, D87, and N115–A116 contribute to the S-adenosyl-L-methionine site.

It belongs to the class I-like SAM-binding methyltransferase superfamily. MenG/UbiE family.

It catalyses the reaction a 2-demethylmenaquinol + S-adenosyl-L-methionine = a menaquinol + S-adenosyl-L-homocysteine + H(+). It participates in quinol/quinone metabolism; menaquinone biosynthesis; menaquinol from 1,4-dihydroxy-2-naphthoate: step 2/2. Functionally, methyltransferase required for the conversion of demethylmenaquinol (DMKH2) to menaquinol (MKH2). The protein is Demethylmenaquinone methyltransferase of Symbiobacterium thermophilum (strain DSM 24528 / JCM 14929 / IAM 14863 / T).